A 256-amino-acid chain; its full sequence is Indole-3-glycerol phosphate synthase (256 aa).

Belongs to the TrpC family.

The catalysed reaction is 1-(2-carboxyphenylamino)-1-deoxy-D-ribulose 5-phosphate + H(+) = (1S,2R)-1-C-(indol-3-yl)glycerol 3-phosphate + CO2 + H2O. It functions in the pathway amino-acid biosynthesis; L-tryptophan biosynthesis; L-tryptophan from chorismate: step 4/5. The sequence is that of Indole-3-glycerol phosphate synthase from Pelodictyon phaeoclathratiforme (strain DSM 5477 / BU-1).